We begin with the raw amino-acid sequence, 428 residues long: Cell number regulator 13 (428 aa).

Over residues 233 to 280 the composition is skewed to basic and acidic residues; the sequence is PEKETNVKAPEKKGSNYSESKGETAKSFDDDDDYPKKQNGDYPKKQKD. The disordered stretch occupies residues 233 to 290; that stretch reads PEKETNVKAPEKKGSNYSESKGETAKSFDDDDDYPKKQNGDYPKKQKDTCSTQRCSSQ. Positions 281 to 290 are enriched in polar residues; the sequence is TCSTQRCSSQ. Residues 354–370 form a helical membrane-spanning segment; it reads IMAYSLILSCCCYTCCV.

In terms of tissue distribution, expressed in roots, coleoptiles, leaves, stalks, apical meristems, immature ears, embryos, endosperm, pericarp, silks and tassel spikelets. Not detected in pollen.

The protein localises to the membrane. The chain is Cell number regulator 13 (CNR13) from Zea mays (Maize).